Consider the following 479-residue polypeptide: Ribosomal RNA small subunit methyltransferase F (479 aa).

S-adenosyl-L-methionine is bound by residues 125–131, Glu149, Asp176, and Asp194; that span reads AAAPGSK. The active-site Nucleophile is Cys247.

Belongs to the class I-like SAM-binding methyltransferase superfamily. RsmB/NOP family.

Its subcellular location is the cytoplasm. It catalyses the reaction cytidine(1407) in 16S rRNA + S-adenosyl-L-methionine = 5-methylcytidine(1407) in 16S rRNA + S-adenosyl-L-homocysteine + H(+). Functionally, specifically methylates the cytosine at position 1407 (m5C1407) of 16S rRNA. This is Ribosomal RNA small subunit methyltransferase F from Salmonella typhi.